The chain runs to 434 residues: Probable phosphoglucosamine mutase (434 aa).

Catalysis depends on S91, which acts as the Phosphoserine intermediate. Residues S91, D229, D231, and D233 each contribute to the Mg(2+) site. S91 is subject to Phosphoserine.

Belongs to the phosphohexose mutase family. Requires Mg(2+) as cofactor. Post-translationally, activated by phosphorylation.

It catalyses the reaction alpha-D-glucosamine 1-phosphate = D-glucosamine 6-phosphate. Its function is as follows. Catalyzes the conversion of glucosamine-6-phosphate to glucosamine-1-phosphate. The chain is Probable phosphoglucosamine mutase from Methanosarcina barkeri (strain Fusaro / DSM 804).